We begin with the raw amino-acid sequence, 207 residues long: Urease accessory protein UreG (207 aa).

GTP is bound at residue 14–21 (GPVGSGKT).

It belongs to the SIMIBI class G3E GTPase family. UreG subfamily. As to quaternary structure, homodimer. UreD, UreF and UreG form a complex that acts as a GTP-hydrolysis-dependent molecular chaperone, activating the urease apoprotein by helping to assemble the nickel containing metallocenter of UreC. The UreE protein probably delivers the nickel.

The protein localises to the cytoplasm. In terms of biological role, facilitates the functional incorporation of the urease nickel metallocenter. This process requires GTP hydrolysis, probably effectuated by UreG. The chain is Urease accessory protein UreG from Chelativorans sp. (strain BNC1).